The primary structure comprises 230 residues: Claudin-2 (230 aa).

The Cytoplasmic portion of the chain corresponds to 1–7; sequence MASLGVQ. A helical membrane pass occupies residues 8–28; that stretch reads LVGYILGLLGLLGTSIAMLLP. The Extracellular portion of the chain corresponds to 29-81; that stretch reads NWRTSSYVGASIVTAVGFSKGLWMECATHSTGITQCDIYSTLLGLPADIQAAQ. A disulfide bond links Cys54 and Cys64. The chain crosses the membrane as a helical span at residues 82-102; sequence AMMVTSSAMSSLACIISVVGM. Residues 103–116 lie on the Cytoplasmic side of the membrane; that stretch reads RCTVFCQDSRAKDR. A helical membrane pass occupies residues 117–137; sequence VAVVGGVFFILGGILGFIPVA. The Extracellular portion of the chain corresponds to 138–162; it reads WNLHGILRDFYSPLVPDSMKFEIGE. Residues 163 to 183 form a helical membrane-spanning segment; it reads ALYLGIISALFSLVAGVILCF. The Cytoplasmic segment spans residues 184–230; sequence SCSPQGNRTNYYDGYQAQPLATRSSPRSAQQPKAKSEFNSYSLTGYV. The segment at 205 to 230 is disordered; sequence TRSSPRSAQQPKAKSEFNSYSLTGYV. Lys218 is covalently cross-linked (Glycyl lysine isopeptide (Lys-Gly) (interchain with G-Cter in SUMO)). Phosphoserine occurs at positions 219 and 223. The interval 229–230 is interactions with TJP1, TJP2 and TJP3; sequence YV.

The protein belongs to the claudin family. In terms of assembly, can form homo- and heteropolymers with other claudins to mediate paracellular barrier and channel functions of tight junctions in response to physiological stimuli. Homopolymers interact with CLDN3, but not CLDN1, homopolymers. Directly interacts with TJP1/ZO-1, TJP2/ZO-2 and TJP3/ZO-3. In terms of processing, the disulfide bond is necessary for pore formation, but is not required for correct protein trafficking. As to expression, expressed in the kidney, liver and intestine, with higher levels in the ileum than in the jejunum. Low levels in the brain. Expressed in colonic epithelium (at protein level). Expressed in the perivenous regions, bile ducts, and gallbladder epithelium (at protein level).

It localises to the cell junction. It is found in the tight junction. The protein resides in the cell membrane. It carries out the reaction Na(+)(in) = Na(+)(out). It catalyses the reaction K(+)(in) = K(+)(out). The catalysed reaction is Rb(+)(in) = Rb(+)(out). The enzyme catalyses Li(+)(in) = Li(+)(out). It carries out the reaction Cs(+)(in) = Cs(+)(out). It catalyses the reaction Ca(2+)(in) = Ca(2+)(out). The catalysed reaction is methylamine(out) = methylamine(in). The enzyme catalyses choline(out) = choline(in). It carries out the reaction H2O(in) = H2O(out). With respect to regulation, the channel permeability is down-regulated at acidic pH. Functionally, forms paracellular channels: polymerizes in tight junction strands with cation- and water-selective channels through the strands, conveying epithelial permeability in a process known as paracellular tight junction permeability. In intestinal epithelium, allows for sodium and water fluxes from the peritoneal side to the lumen of the intestine to regulate nutrient absorption and clear enteric pathogens as part of mucosal immune response. In kidney, allows passive sodium and calcium reabsorption across proximal tubules from the lumen back to the bloodstream. In the hepatobiliary tract, allows paracellular water and cation fluxes in the hepatic perivenous areas and biliary epithelium to generate bile flow and maintain osmotic gradients. The sequence is that of Claudin-2 from Mus musculus (Mouse).